A 354-amino-acid chain; its full sequence is Putrescine/cadaverine-binding protein (354 aa).

The signal sequence occupies residues 1-20; it reads MMKKLLLVATLMAGAAQATA.

It belongs to the bacterial solute-binding protein 1 family.

It is found in the periplasm. Binds putrescine and cadaverine. This chain is Putrescine/cadaverine-binding protein, found in Pseudomonas aeruginosa (strain ATCC 15692 / DSM 22644 / CIP 104116 / JCM 14847 / LMG 12228 / 1C / PRS 101 / PAO1).